Reading from the N-terminus, the 355-residue chain is Cyclic nucleotide-gated potassium channel mll3241 (355 aa).

Topologically, residues 1 to 12 are cytoplasmic; sequence MSVLPFLRIYAP. A helical transmembrane segment spans residues 13–30; it reads LNAVLAAPGLLAVAALTI. Residues 31-38 lie on the Periplasmic side of the membrane; the sequence is PDMSGRSR. A helical membrane pass occupies residues 39-61; it reads LALAALLAVIWGAYLLQLAATLL. The Cytoplasmic portion of the chain corresponds to 62–74; that stretch reads KRRAGVVRDRTPK. Residues 75-94 traverse the membrane as a helical segment; the sequence is IAIDVLAVLVPLAAFLLDGS. Residues 95–112 form a helical membrane-spanning segment; the sequence is PDWSLYCAVWLLKPLRDS. Residues 113-129 lie on the Cytoplasmic side of the membrane; sequence TFFPVLGRVLANEARNL. Residues 130-150 form a helical membrane-spanning segment; sequence IGVTTLFGVVLFAVALAAYVI. The Periplasmic portion of the chain corresponds to 151–161; the sequence is ERDIQPEKFGS. An intramembrane region (pore-forming) is located at residues 162-180; sequence IPQAMWWAVVTLSTTGYGD. A Selectivity filter motif is present at residues 175 to 180; it reads TTGYGD. At 181–185 the chain is on the periplasmic side; that stretch reads TIPQS. A helical transmembrane segment spans residues 186-210; it reads FAGRVLAGAVMMSGIGIFGLWAGIL. At 211 to 355 the chain is on the cytoplasmic side; it reads ATGFYQEVRR…LERRGAAASA (145 aa). Residues 297 to 298, 307 to 308, and R348 contribute to the 3',5'-cyclic AMP site; these read GE and RS.

It belongs to the potassium channel family. Homotetramer.

It localises to the cell membrane. Its function is as follows. Cyclic nucleotide-regulated potassium channel activated by cAMP. The chain is Cyclic nucleotide-gated potassium channel mll3241 from Mesorhizobium japonicum (strain LMG 29417 / CECT 9101 / MAFF 303099) (Mesorhizobium loti (strain MAFF 303099)).